A 308-amino-acid polypeptide reads, in one-letter code: Mycothiol acetyltransferase (308 aa).

N-acetyltransferase domains lie at 12-149 (DVLD…RPLG) and 165-308 (VTVR…RTET). 1D-myo-inositol 2-(L-cysteinylamino)-2-deoxy-alpha-D-glucopyranoside is bound at residue E43. 88–90 (LVV) lines the acetyl-CoA pocket. 1D-myo-inositol 2-(L-cysteinylamino)-2-deoxy-alpha-D-glucopyranoside contacts are provided by E192, K231, and E240. Residues 244–246 (VGV) and 251–257 (QGGGLGR) contribute to the acetyl-CoA site. Position 278 (Y278) interacts with 1D-myo-inositol 2-(L-cysteinylamino)-2-deoxy-alpha-D-glucopyranoside.

It belongs to the acetyltransferase family. MshD subfamily. As to quaternary structure, monomer.

It carries out the reaction 1D-myo-inositol 2-(L-cysteinylamino)-2-deoxy-alpha-D-glucopyranoside + acetyl-CoA = mycothiol + CoA + H(+). In terms of biological role, catalyzes the transfer of acetyl from acetyl-CoA to desacetylmycothiol (Cys-GlcN-Ins) to form mycothiol. The polypeptide is Mycothiol acetyltransferase (Streptomyces bingchenggensis (strain BCW-1)).